We begin with the raw amino-acid sequence, 173 residues long: ATP-dependent protease subunit HslV (173 aa).

Residue Thr-2 is part of the active site. Residues Gly-157, Cys-160, and Thr-163 each coordinate Na(+).

This sequence belongs to the peptidase T1B family. HslV subfamily. In terms of assembly, a double ring-shaped homohexamer of HslV is capped on each side by a ring-shaped HslU homohexamer. The assembly of the HslU/HslV complex is dependent on binding of ATP.

It localises to the cytoplasm. It catalyses the reaction ATP-dependent cleavage of peptide bonds with broad specificity.. Its activity is regulated as follows. Allosterically activated by HslU binding. Protease subunit of a proteasome-like degradation complex believed to be a general protein degrading machinery. The protein is ATP-dependent protease subunit HslV of Nitrosomonas eutropha (strain DSM 101675 / C91 / Nm57).